The chain runs to 199 residues: Glycerol-3-phosphate acyltransferase (199 aa).

Transmembrane regions (helical) follow at residues 5–25 (VLTI…SAVL), 56–76 (SAAL…YLAF), 83–103 (IALG…IFFG), 118–138 (APIG…LVLV), and 141–161 (YSSF…WWLD).

It belongs to the PlsY family. Probably interacts with PlsX.

Its subcellular location is the cell inner membrane. The catalysed reaction is an acyl phosphate + sn-glycerol 3-phosphate = a 1-acyl-sn-glycero-3-phosphate + phosphate. It functions in the pathway lipid metabolism; phospholipid metabolism. In terms of biological role, catalyzes the transfer of an acyl group from acyl-phosphate (acyl-PO(4)) to glycerol-3-phosphate (G3P) to form lysophosphatidic acid (LPA). This enzyme utilizes acyl-phosphate as fatty acyl donor, but not acyl-CoA or acyl-ACP. This is Glycerol-3-phosphate acyltransferase from Shewanella halifaxensis (strain HAW-EB4).